Reading from the N-terminus, the 502-residue chain is Glycerol kinase (502 aa).

Threonine 14 contributes to the ADP binding site. 3 residues coordinate ATP: threonine 14, threonine 15, and serine 16. Threonine 14 contacts sn-glycerol 3-phosphate. Arginine 18 is an ADP binding site. Sn-glycerol 3-phosphate-binding residues include arginine 84, glutamate 85, and tyrosine 136. Residues arginine 84, glutamate 85, and tyrosine 136 each contribute to the glycerol site. The residue at position 232 (histidine 232) is a Phosphohistidine; by HPr. Aspartate 246 lines the sn-glycerol 3-phosphate pocket. The glycerol site is built by aspartate 246 and glutamine 247. Positions 268 and 311 each coordinate ADP. Residues threonine 268, glycine 311, glutamine 315, and glycine 412 each contribute to the ATP site. Glycine 412 and asparagine 416 together coordinate ADP.

It belongs to the FGGY kinase family. Homotetramer and homodimer (in equilibrium). In terms of processing, the phosphoenolpyruvate-dependent sugar phosphotransferase system (PTS), including enzyme I, and histidine-containing protein (HPr) are required for the phosphorylation, which leads to the activation of the enzyme.

It carries out the reaction glycerol + ATP = sn-glycerol 3-phosphate + ADP + H(+). The protein operates within polyol metabolism; glycerol degradation via glycerol kinase pathway; sn-glycerol 3-phosphate from glycerol: step 1/1. Its activity is regulated as follows. Activated by phosphorylation and inhibited by fructose 1,6-bisphosphate (FBP). In terms of biological role, key enzyme in the regulation of glycerol uptake and metabolism. Catalyzes the phosphorylation of glycerol to yield sn-glycerol 3-phosphate. The protein is Glycerol kinase of Streptococcus pneumoniae serotype 2 (strain D39 / NCTC 7466).